The following is a 43-amino-acid chain: Protein PsbN (43 aa).

A helical membrane pass occupies residues 5 to 25; the sequence is LILSIFIFSLLLGITSYSIYI.

Belongs to the PsbN family.

It localises to the plastid. The protein resides in the chloroplast thylakoid membrane. Its function is as follows. May play a role in photosystem I and II biogenesis. This chain is Protein PsbN, found in Cyanidium caldarium (Red alga).